Consider the following 415-residue polypeptide: Probable beta-1,4-xylosyltransferase IRX10L (415 aa).

Position 1 (methionine 1) is a topological domain, cytoplasmic. A helical; Signal-anchor for type II membrane protein transmembrane segment spans residues lysine 2–phenylalanine 22. Residues arginine 23–tryptophan 415 lie on the Lumenal side of the membrane. N-linked (GlcNAc...) asparagine glycans are attached at residues asparagine 142 and asparagine 403.

Belongs to the glycosyltransferase 47 family. As to expression, present in the xylem and phloem, and, to a lower extent, in interfascicular cells. Expressed in the root tip, shoot apical meristem (SAM), xylem cells of roots and stems, and in the vasculature of roots, cotyledons and leaves.

The protein localises to the golgi apparatus membrane. Involved in the synthesis of the hemicellulose glucuronoxylan, a major component of secondary cell walls. Probably involved in the elongation of glucuronoxylan xylosyl backbone. The chain is Probable beta-1,4-xylosyltransferase IRX10L (IRX10L) from Arabidopsis thaliana (Mouse-ear cress).